Here is a 283-residue protein sequence, read N- to C-terminus: (+)-O-methylkolavelool synthase (283 aa).

S-adenosyl-L-methionine is bound by residues Gln106, 129–130 (NA), and His151.

It belongs to the methyltransferase superfamily.

The catalysed reaction is (+)-kolavelool + S-adenosyl-L-methionine = (+)-O-methylkolavelool + S-adenosyl-L-homocysteine + H(+). Functionally, involved in the biosynthesis of the diterpene (+)-O-methylkolavelool. Catalyzes the transfer of a methyl group from S-adenosyl-L-methionine to the hydroxy group of (+)-kolavelool, forming (+)-O-methylkolavelool. The protein is (+)-O-methylkolavelool synthase of Herpetosiphon aurantiacus (strain ATCC 23779 / DSM 785 / 114-95).